The primary structure comprises 463 residues: Bifunctional protein HldE (463 aa).

The ribokinase stretch occupies residues methionine 1–aspartate 313. The active site involves aspartate 258. Positions alanine 331–arginine 463 are cytidylyltransferase.

This sequence in the N-terminal section; belongs to the carbohydrate kinase PfkB family. It in the C-terminal section; belongs to the cytidylyltransferase family. Homodimer.

It catalyses the reaction D-glycero-beta-D-manno-heptose 7-phosphate + ATP = D-glycero-beta-D-manno-heptose 1,7-bisphosphate + ADP + H(+). The enzyme catalyses D-glycero-beta-D-manno-heptose 1-phosphate + ATP + H(+) = ADP-D-glycero-beta-D-manno-heptose + diphosphate. It participates in nucleotide-sugar biosynthesis; ADP-L-glycero-beta-D-manno-heptose biosynthesis; ADP-L-glycero-beta-D-manno-heptose from D-glycero-beta-D-manno-heptose 7-phosphate: step 1/4. The protein operates within nucleotide-sugar biosynthesis; ADP-L-glycero-beta-D-manno-heptose biosynthesis; ADP-L-glycero-beta-D-manno-heptose from D-glycero-beta-D-manno-heptose 7-phosphate: step 3/4. Its function is as follows. Catalyzes the phosphorylation of D-glycero-D-manno-heptose 7-phosphate at the C-1 position to selectively form D-glycero-beta-D-manno-heptose-1,7-bisphosphate. Functionally, catalyzes the ADP transfer from ATP to D-glycero-beta-D-manno-heptose 1-phosphate, yielding ADP-D-glycero-beta-D-manno-heptose. This chain is Bifunctional protein HldE, found in Streptomyces coelicolor (strain ATCC BAA-471 / A3(2) / M145).